A 113-amino-acid polypeptide reads, in one-letter code: Large ribosomal subunit protein bL19 (113 aa).

The protein belongs to the bacterial ribosomal protein bL19 family.

In terms of biological role, this protein is located at the 30S-50S ribosomal subunit interface and may play a role in the structure and function of the aminoacyl-tRNA binding site. This Mycolicibacterium gilvum (strain PYR-GCK) (Mycobacterium gilvum (strain PYR-GCK)) protein is Large ribosomal subunit protein bL19.